Here is a 215-residue protein sequence, read N- to C-terminus: MASATLTAWIKMPSFLKKILKLRGRRQEEESRSRMLSDSSMLSCRVNQLTSEGTEAGSTTPSTLPKDQALPIEPKVRAKEKSQHRRPKIIDQVRRVESLGEQASQRQKHMLETLINKIYTGPLGEELVQTLYLRIWAMEETPESLKILQMREDIRDQVLKMKTERWLRTLIRGEKTKLKDFQKRYEEVHPYLMKEKVEQVIMEEAWSLAAHIVQE.

Disordered stretches follow at residues 12–34 and 51–71; these read MPSF…SRSR and SEGT…QALP. Residues 15–22 are involved in self-degradation and in host STAT1 degradation; it reads FLKKILKL. The span at 51 to 65 shows a compositional bias: polar residues; the sequence is SEGTEAGSTTPSTLP.

Belongs to the respirovirus protein C family. The different isoforms interact (via C-terminus) with unphosphorylated and phosphorylated human STAT1 (via N-terminus), favoring the formation of parallel STAT1 homodimers. The different isoforms do not interact with host STAT2. C protein interacts with L protein; this interaction has an inhibitory effect on viral transcription and replication. Y1 and Y2 proteins are produced not only by alternative initiation, but also by proteolytic cleavage of C'. Only alternative initiation is detected in vitro, whereas in vivo cleavage seems to be predominant.

It is found in the host cytoplasm. Functionally, the different products prevent the establishment of cellular antiviral state by blocking the interferon-alpha/beta (IFN-alpha/beta) and IFN-gamma signaling pathways. They inhibit IFN-alpha/beta induced tyrosine phosphorylation of STAT1 and STAT2. Blocking the IFN-alpha/beta pathway requires binding to STAT1 in the cytoplasm. They inhibit IFN-gamma induced serine phosphorylation of STAT1. Block the IFN-gamma pathway by binding to and stabilizing the parallel form of the STAT1 dimer, further inducing high-molecular-weight complex formation and inhibition of transcription by IFN-gamma. May also have a role in preventing the cell to enter apoptosis. Modulate regulation of viral transcription and replication. Overexpression inhibits the viral RNA polymerase. The absence of all C', C, Y1 and Y2 proteins leads to viral delayed growth. Plays an important role in virion particles release. Modulates virion shape. This Sendai virus (strain Harris) (SeV) protein is Protein C' (P/V/C).